Here is a 178-residue protein sequence, read N- to C-terminus: Large ribosomal subunit protein uL5 (178 aa).

The protein belongs to the universal ribosomal protein uL5 family. Part of the 50S ribosomal subunit; part of the 5S rRNA/L5/L18/L25 subcomplex. Contacts the 5S rRNA and the P site tRNA. Forms a bridge to the 30S subunit in the 70S ribosome.

In terms of biological role, this is one of the proteins that bind and probably mediate the attachment of the 5S RNA into the large ribosomal subunit, where it forms part of the central protuberance. In the 70S ribosome it contacts protein S13 of the 30S subunit (bridge B1b), connecting the 2 subunits; this bridge is implicated in subunit movement. Contacts the P site tRNA; the 5S rRNA and some of its associated proteins might help stabilize positioning of ribosome-bound tRNAs. The protein is Large ribosomal subunit protein uL5 of Wolbachia pipientis subsp. Culex pipiens (strain wPip).